Consider the following 242-residue polypeptide: Probable ABC transporter ATP-binding protein PEB1C (242 aa).

The region spanning 2-236 is the ABC transporter domain; sequence IELKNVNKYY…PKTERARLFL (235 aa). 34-41 provides a ligand contact to ATP; it reads GPSGSGKS.

This sequence belongs to the ABC transporter superfamily.

The protein resides in the cell inner membrane. Functionally, most probably involved, with PEB1, in a binding-protein-dependent transport system for an amino acid. Probably responsible for energy coupling to the transport system. In Campylobacter jejuni subsp. jejuni serotype O:23/36 (strain 81-176), this protein is Probable ABC transporter ATP-binding protein PEB1C (peb1C).